The following is a 356-amino-acid chain: S-adenosylmethionine:tRNA ribosyltransferase-isomerase (356 aa).

This sequence belongs to the QueA family. Monomer.

The protein resides in the cytoplasm. The catalysed reaction is 7-aminomethyl-7-carbaguanosine(34) in tRNA + S-adenosyl-L-methionine = epoxyqueuosine(34) in tRNA + adenine + L-methionine + 2 H(+). Its pathway is tRNA modification; tRNA-queuosine biosynthesis. Its function is as follows. Transfers and isomerizes the ribose moiety from AdoMet to the 7-aminomethyl group of 7-deazaguanine (preQ1-tRNA) to give epoxyqueuosine (oQ-tRNA). This is S-adenosylmethionine:tRNA ribosyltransferase-isomerase from Shigella dysenteriae serotype 1 (strain Sd197).